Consider the following 345-residue polypeptide: Sesquiterpene synthase GALMADRAFT_104215 (345 aa).

4 residues coordinate Mg(2+): aspartate 91, asparagine 226, serine 230, and glutamate 234. A DDXXD motif motif is present at residues 91 to 95 (DEFTD). (2E,6E)-farnesyl diphosphate-binding residues include arginine 316 and tyrosine 317.

Belongs to the terpene synthase family. Mg(2+) is required as a cofactor.

The catalysed reaction is (2E,6E)-farnesyl diphosphate = beta-gurjunene + diphosphate. Terpene cyclase that catalyzes the cyclization of farnesyl diphosphate (FPP) to beta-gurjunene. The sequence is that of Sesquiterpene synthase GALMADRAFT_104215 from Galerina marginata (strain CBS 339.88).